The chain runs to 62 residues: Photosystem II reaction center protein Z (62 aa).

2 consecutive transmembrane segments (helical) span residues 8 to 28 and 41 to 61; these read ALFA…VAFA and FQGV…NSLV.

The protein belongs to the PsbZ family. PSII is composed of 1 copy each of membrane proteins PsbA, PsbB, PsbC, PsbD, PsbE, PsbF, PsbH, PsbI, PsbJ, PsbK, PsbL, PsbM, PsbT, PsbY, PsbZ, Psb30/Ycf12, at least 3 peripheral proteins of the oxygen-evolving complex and a large number of cofactors. It forms dimeric complexes.

It localises to the plastid. The protein resides in the chloroplast thylakoid membrane. Its function is as follows. May control the interaction of photosystem II (PSII) cores with the light-harvesting antenna, regulates electron flow through the 2 photosystem reaction centers. PSII is a light-driven water plastoquinone oxidoreductase, using light energy to abstract electrons from H(2)O, generating a proton gradient subsequently used for ATP formation. This Nephroselmis olivacea (Green alga) protein is Photosystem II reaction center protein Z.